We begin with the raw amino-acid sequence, 253 residues long: Small ribosomal subunit protein cS22 (253 aa).

Residues 1 to 56 (MATFLTNVVSIKPTIFSFQSESFTPLHTRVNVFSSKPFPSLAGTFSRSSRTRFIPY) constitute a chloroplast transit peptide. RRM domains are found at residues 76–154 (RRVY…ITEK) and 177–253 (YKVY…VNKA).

It belongs to the chloroplast-specific ribosomal protein cS22 family. As to quaternary structure, component of the chloroplast small ribosomal subunit (SSU). Mature 70S chloroplast ribosomes of higher plants consist of a small (30S) and a large (50S) subunit. The 30S small subunit contains 1 molecule of ribosomal RNA (16S rRNA) and 24 different proteins. The 50S large subunit contains 3 rRNA molecules (23S, 5S and 4.5S rRNA) and 33 different proteins. Expressed constitutively in roots, stems, flower buds, flowers and leaves.

It is found in the plastid. It localises to the chloroplast. In terms of biological role, component of the chloroplast ribosome (chloro-ribosome), a dedicated translation machinery responsible for the synthesis of chloroplast genome-encoded proteins, including proteins of the transcription and translation machinery and components of the photosynthetic apparatus. May have a role in the recruitment of stored chloroplast mRNAs for active protein synthesis. Bind single strand DNA (ssDNA) and RNA in vitro. Exhibits RNA chaperone activity. Negatively regulates resistance responses to abiotic stresses during seed germination (e.g. salt, dehydration, and low temperature) and seedling growth (e.g. salt). The sequence is that of Small ribosomal subunit protein cS22 from Arabidopsis thaliana (Mouse-ear cress).